Reading from the N-terminus, the 683-residue chain is Translation factor guf1, mitochondrial (683 aa).

Residues 1 to 43 constitute a mitochondrion transit peptide; it reads MRGCLQLARWLSAAPKGTAASLTRAPFVLANAPRYFTSSASRA. A tr-type G domain is found at 66–250; it reads ERYRNFCIVA…KIPAYGHFPV (185 aa). Residues 75–82, 139–143, and 193–196 contribute to the GTP site; these read AHVDHGKS, DTPGH, and NKVD.

This sequence belongs to the TRAFAC class translation factor GTPase superfamily. Classic translation factor GTPase family. LepA subfamily.

It is found in the mitochondrion inner membrane. The enzyme catalyses GTP + H2O = GDP + phosphate + H(+). Promotes mitochondrial protein synthesis. May act as a fidelity factor of the translation reaction, by catalyzing a one-codon backward translocation of tRNAs on improperly translocated ribosomes. Binds to mitochondrial ribosomes in a GTP-dependent manner. In Aspergillus fumigatus (strain ATCC MYA-4609 / CBS 101355 / FGSC A1100 / Af293) (Neosartorya fumigata), this protein is Translation factor guf1, mitochondrial (guf1).